The following is an 851-amino-acid chain: Alanine--tRNA ligase (851 aa).

Residues His-535, His-539, Cys-637, and His-641 each coordinate Zn(2+).

It belongs to the class-II aminoacyl-tRNA synthetase family. Zn(2+) is required as a cofactor.

The protein localises to the cytoplasm. The enzyme catalyses tRNA(Ala) + L-alanine + ATP = L-alanyl-tRNA(Ala) + AMP + diphosphate. Functionally, catalyzes the attachment of alanine to tRNA(Ala) in a two-step reaction: alanine is first activated by ATP to form Ala-AMP and then transferred to the acceptor end of tRNA(Ala). Also edits incorrectly charged Ser-tRNA(Ala) and Gly-tRNA(Ala) via its editing domain. The polypeptide is Alanine--tRNA ligase (Acholeplasma laidlawii (strain PG-8A)).